The sequence spans 1117 residues: MQSGTCESFQSLSHQRNDEEAVVDRGGTRSILKTHFEKEDLEGHRTLFIGVHVPLGGRKSHRRHRHRGHKHRKRDRERDSGLEDGRESPSFDTPSQRVQFILGTEDDDEEHIPHDLFTELDEICWREGEDAEWRETARWLKFEEDVEDGGERWSKPYVATLSLHSLFELRSCILNGTVLLDMHANTLEEIADMVLDQQVSSGQLNEDVRHRVHEALMKQHHHQNQKKLTNRIPIVRSFADIGKKQSEPNSMDKNAGQVVSPQSAPACVENKNDVSRENSTVDFSKGLGGQQKGHTSPCGMKQRHEKGPPHQQDREVDLHFMKKIPPGAEASNILVGELEFLDRTVVAFVRLSPAVLLQGLAEVPIPTRFLFILLGPLGKGQQYHEIGRSIATLMTDEVFHDVAYKAKDRNDLVSGIDEFLDQVTVLPPGEWDPSIRIEPPKNVPSQEKRKIPAVPNGTAAHGEAEPHGGHSGPELQRTGRLFGGLILDIKRKAPYFWSDFTDALSLQCLASFLFLYCACMSPVITFGGLLGEATEGRISAIESLFGASMTGIAYSLFGGQPLTILGSTGPVLVFEKILFKFCKEYGLSYLSLRASIGLWTATLCIILVATDASSLVCYITRFTEEAFASLICIIFIYEALEKLFELSEAYPINMHNDLELLTQYSCNCVEPHNPSNNTLKEWRESNISASDIIWENLTVSECTSLHGEYVGRACGHEHPYVPDVLFWSVILFFSTVTLSATLKQFKTSRYFPTKVRSIVSDFAVFLTILCMVLIDYAIGIPSPKLQVPSVFKPTRDDRGWFVTPLGPNPWWTVIAAIIPALLCTILIFMDQQITAVIINRKEHKLKKGCGYHLDLLMVAVMLGVCSIMGLPWFVAATVLSITHVNSLKLESECSAPGEQPKFLGIREQRVTGLMIFILMGSSVFMTSILKFIPMPVLYGVFLYMGASSLKGIQFFDRIKLFWMPAKHQPDFIYLRHVPLRKVHLFTVIQMSCLGLLWIIKVSRAAIVFPMMVLALVFVRKLMDFLFTKRELSWLDDLMPESKKKKLEDAEKEEEQSMLAMEDEGTVQLPLEGHYRDDPSVINISDEMSKTALWRNLLITADNSKDKESSFPSKSSPS.

Residues 1 to 14 (MQSGTCESFQSLSH) are compositionally biased toward polar residues. Disordered stretches follow at residues 1–26 (MQSG…VDRG), 57–94 (GRKS…FDTP), 244–312 (KQSE…PHQQ), and 456–475 (NGTA…GPEL). Topologically, residues 1–508 (MQSGTCESFQ…DFTDALSLQC (508 aa)) are cytoplasmic. A compositionally biased stretch (basic and acidic residues) spans 15–26 (QRNDEEAVVDRG). Residues 58–75 (RKSHRRHRHRGHKHRKRD) are compositionally biased toward basic residues. Residues 76–89 (RERDSGLEDGRESP) show a composition bias toward basic and acidic residues. Phosphoserine is present on serine 88. Threonine 93 bears the Phosphothreonine mark. Positions 247 to 263 (EPNSMDKNAGQVVSPQS) are enriched in polar residues. Serine 275 is modified (phosphoserine). The helical transmembrane segment at 509–529 (LASFLFLYCACMSPVITFGGL) threads the bilayer. Over 530 to 537 (LGEATEGR) the chain is Extracellular. Residues 538–558 (ISAIESLFGASMTGIAYSLFG) form a helical membrane-spanning segment. Topologically, residues 559 to 561 (GQP) are cytoplasmic. Residues 562–582 (LTILGSTGPVLVFEKILFKFC) form a helical membrane-spanning segment. Over 583–595 (KEYGLSYLSLRAS) the chain is Extracellular. Residues 596 to 616 (IGLWTATLCIILVATDASSLV) traverse the membrane as a helical segment. At 617-625 (CYITRFTEE) the chain is on the cytoplasmic side. Residues 626-646 (AFASLICIIFIYEALEKLFEL) traverse the membrane as a helical segment. The Extracellular segment spans residues 647–719 (SEAYPINMHN…VGRACGHEHP (73 aa)). N-linked (GlcNAc...) asparagine glycosylation is found at asparagine 673, asparagine 676, asparagine 686, and asparagine 696. Residues 720-740 (YVPDVLFWSVILFFSTVTLSA) form a helical membrane-spanning segment. Topologically, residues 741–761 (TLKQFKTSRYFPTKVRSIVSD) are cytoplasmic. A helical membrane pass occupies residues 762–782 (FAVFLTILCMVLIDYAIGIPS). Residues 783-808 (PKLQVPSVFKPTRDDRGWFVTPLGPN) lie on the Extracellular side of the membrane. A helical membrane pass occupies residues 809-829 (PWWTVIAAIIPALLCTILIFM). The Cytoplasmic segment spans residues 830-854 (DQQITAVIINRKEHKLKKGCGYHLD). A helical membrane pass occupies residues 855 to 875 (LLMVAVMLGVCSIMGLPWFVA). Over 876–911 (ATVLSITHVNSLKLESECSAPGEQPKFLGIREQRVT) the chain is Extracellular. Residues 912–932 (GLMIFILMGSSVFMTSILKFI) form a helical membrane-spanning segment. At 933-934 (PM) the chain is on the cytoplasmic side. The helical transmembrane segment at 935–955 (PVLYGVFLYMGASSLKGIQFF) threads the bilayer. The Extracellular portion of the chain corresponds to 956–997 (DRIKLFWMPAKHQPDFIYLRHVPLRKVHLFTVIQMSCLGLLW). Residues 998–1018 (IIKVSRAAIVFPMMVLALVFV) form a helical membrane-spanning segment. Over 1019–1117 (RKLMDFLFTK…SSFPSKSSPS (99 aa)) the chain is Cytoplasmic. Phosphoserine is present on residues serine 1056 and serine 1084.

The protein belongs to the anion exchanger (TC 2.A.31) family. N-glycosylated.

Its subcellular location is the basolateral cell membrane. The protein resides in the apical cell membrane. The protein localises to the cell projection. It localises to the dendrite. It is found in the axon. Its subcellular location is the perikaryon. The protein resides in the presynapse. The protein localises to the postsynapse. Its function is as follows. Sodium/bicarbonate cotransporter which plays an important role in regulating intracellular pH. Has been shown to act as a sodium/bicarbonate cotransporter in exchange for intracellular chloride. Has also been shown to act as a sodium/biocarbonate cotransporter which does not couple net influx of bicarbonate to net efflux of chloride, with the observed chloride efflux being due to chloride self-exchange. Controls neuronal pH and may contribute to the secretion of cerebrospinal fluid. Acting on presynaptic intracellular pH, it promotes GABA release, reduces the excitability of CA1 pyramidal neurons, and modulates short-term synaptic plasticity. Required in retinal cells to maintain normal pH which is necessary for normal vision. In the kidney, likely to mediate bicarbonate reclamation in the apical membrane of the proximal tubules. The polypeptide is Sodium-driven chloride bicarbonate exchanger (Bos taurus (Bovine)).